The chain runs to 198 residues: Cytochrome c oxidase subunit 2 (198 aa).

A helical transmembrane segment spans residues 1–13 (AICSLVLYLLTLM). At 14–26 (LMEKLSSNTVDAQ) the chain is on the mitochondrial matrix side. Residues 27–54 (EVELIWTILPAIVLILLALPSLQILYMM) form a helical membrane-spanning segment. At 55 to 198 (DEIDEPDLTL…WSSLLSTSSL (144 aa)) the chain is on the mitochondrial intermembrane side. Positions 128, 163, 165, 167, 171, and 174 each coordinate Cu cation. Glu165 is a binding site for Mg(2+).

This sequence belongs to the cytochrome c oxidase subunit 2 family. In terms of assembly, component of the cytochrome c oxidase (complex IV, CIV), a multisubunit enzyme composed of 14 subunits. The complex is composed of a catalytic core of 3 subunits MT-CO1, MT-CO2 and MT-CO3, encoded in the mitochondrial DNA, and 11 supernumerary subunits COX4I, COX5A, COX5B, COX6A, COX6B, COX6C, COX7A, COX7B, COX7C, COX8 and NDUFA4, which are encoded in the nuclear genome. The complex exists as a monomer or a dimer and forms supercomplexes (SCs) in the inner mitochondrial membrane with NADH-ubiquinone oxidoreductase (complex I, CI) and ubiquinol-cytochrome c oxidoreductase (cytochrome b-c1 complex, complex III, CIII), resulting in different assemblies (supercomplex SCI(1)III(2)IV(1) and megacomplex MCI(2)III(2)IV(2)). Found in a complex with TMEM177, COA6, COX18, COX20, SCO1 and SCO2. Interacts with TMEM177 in a COX20-dependent manner. Interacts with COX20. Interacts with COX16. Cu cation serves as cofactor.

The protein resides in the mitochondrion inner membrane. It catalyses the reaction 4 Fe(II)-[cytochrome c] + O2 + 8 H(+)(in) = 4 Fe(III)-[cytochrome c] + 2 H2O + 4 H(+)(out). Functionally, component of the cytochrome c oxidase, the last enzyme in the mitochondrial electron transport chain which drives oxidative phosphorylation. The respiratory chain contains 3 multisubunit complexes succinate dehydrogenase (complex II, CII), ubiquinol-cytochrome c oxidoreductase (cytochrome b-c1 complex, complex III, CIII) and cytochrome c oxidase (complex IV, CIV), that cooperate to transfer electrons derived from NADH and succinate to molecular oxygen, creating an electrochemical gradient over the inner membrane that drives transmembrane transport and the ATP synthase. Cytochrome c oxidase is the component of the respiratory chain that catalyzes the reduction of oxygen to water. Electrons originating from reduced cytochrome c in the intermembrane space (IMS) are transferred via the dinuclear copper A center (CU(A)) of subunit 2 and heme A of subunit 1 to the active site in subunit 1, a binuclear center (BNC) formed by heme A3 and copper B (CU(B)). The BNC reduces molecular oxygen to 2 water molecules using 4 electrons from cytochrome c in the IMS and 4 protons from the mitochondrial matrix. The protein is Cytochrome c oxidase subunit 2 (MT-CO2) of Tinamus major (Great tinamou).